The chain runs to 370 residues: Metalloproteinase (370 aa).

The first 15 residues, 1–15 (MYLAYIFFLFATVSA), serve as a signal peptide directing secretion. Residues 170-370 (IVIEVLLVTD…DNYGKIFRMF (201 aa)) form the Peptidase M12B domain. N226 is a glycosylation site (N-linked (GalNAc...) asparagine). H320 serves as a coordination point for Zn(2+). Residue E321 is part of the active site. Positions 324 and 330 each coordinate Zn(2+).

Belongs to the venom metalloproteinase (M12B) family. In terms of tissue distribution, expressed by the venom gland.

Its subcellular location is the secreted. Metalloprotease that may disrupt the cell matrix and the process of clotting blood or hemolymph. The protein is Metalloproteinase of Tityus obscurus (Amazonian scorpion).